We begin with the raw amino-acid sequence, 503 residues long: Cytochrome P450 monooxygenase ecdH (503 aa).

A helical membrane pass occupies residues 8 to 24 (TTLLCGVISSTLLLLLL). Residues Asn64, Asn324, and Asn413 are each glycosylated (N-linked (GlcNAc...) asparagine). Cys449 serves as a coordination point for heme.

The protein belongs to the cytochrome P450 family. Requires heme as cofactor.

It is found in the membrane. It functions in the pathway antifungal biosynthesis. Functionally, cytochrome P450 monooxygenase; part of the gene cluster that mediates the biosynthesis of echinocandin B, a fungal lipidated cyclic hexapeptide that acts as an antifungal agent. Linoleoyl-AMP, produced by the fatty-acyl-AMP ligase ecdI, is transferred to the initiation carrier domain (T0) of ecdA. The linoleoyl-S-phosphopantetheinyl-T0 is sequentially extended with L-ornithine, L-threonine, L-proline, L-homotyrosine, L-threonine, and 4R-methyl-L-proline to form the linear hexapeptide. Thereafter, the terminal condensation (C7) performs macrocyclization of the NRPS product and the cyclic scaffold is released from ecdA. All six of the amino acid residues are hydroxylated, including 4R,5R-dihydroxy-L-ornithine, 4R-hydroxyl-L-proline, 3S,4S-dihydroxy-L-homotyrosine, and 3S-hydroxyl-4S-methyl-L-prolin. In the pathway, all the hydroxylation reactions are proposed to occur following completion of the cyclic peptide, so the unhydroxylated precursor produced by ecdA will undergo six rounds of hydroxylation. Five hydroxylase genes (ecdG, ecdH, ecdK, htyE and htyF) are embedded within the echinocandin B (ecd) and L-homotyrosine (hty) clusters. This chain is Cytochrome P450 monooxygenase ecdH, found in Aspergillus rugulosus (Emericella rugulosa).